Consider the following 316-residue polypeptide: Polyprenyl transferase dpchC (316 aa).

8 helical membrane passes run 24–44 (PLFT…AKMA), 60–80 (ALCF…NDWI), 105–125 (EAMV…EVML), 154–174 (MLGI…AVIG), 192–212 (CLPL…AYSY), 234–254 (IHLL…IYLF), 258–278 (SLWL…QQLV), and 296–316 (FILG…TGSA).

This sequence belongs to the UbiA prenyltransferase family. Mg(2+) serves as cofactor.

The protein resides in the membrane. It functions in the pathway secondary metabolite biosynthesis; terpenoid biosynthesis. Polyprenyl transferase; part of the gene cluster that mediates the biosynthesis of the diterpenoid pyrones higginsianins A and B. The first step of the pathway is the synthesis of the alpha-pyrone moiety by the polyketide synthase dpchA via condensation of one acetyl-CoA starter unit with 3 malonyl-CoA units and 2 methylations. The alpha-pyrone is then combined with geranylgeranyl pyrophosphate (GGPP) formed by the GGPP synthase dpchD through the action of the prenyltransferase dpchC to yield a linear alpha-pyrone diterpenoid. Subsequent steps in the diterpenoid pyrone biosynthetic pathway involve the decalin core formation, which is initiated by the epoxidation of the C10-C11 olefin by the FAD-dependent oxidoreductase dpchE, and is followed by a cyclization cascade catalyzed by the terpene cyclase dpchB. The short chain dehydrogenase/reductase dpchG then oxidizes the 8S hydroxy group to a ketone and the short chain dehydrogenase/reductase dpchH reduces the ketone to the 8R hydroxy group to yield higginsianin B. Finally, the FAD-dependent oxidoreductase dpchF converts higginsianin B into higginsianin A. The chain is Polyprenyl transferase dpchC from Colletotrichum higginsianum (strain IMI 349063) (Crucifer anthracnose fungus).